The sequence spans 67 residues: Large ribosomal subunit protein bL35 (67 aa).

Over residues 1 to 32 (MPKLKNHSGAKKRFAKTATGKYKRRKAGRKHL) the composition is skewed to basic residues. A disordered region spans residues 1 to 54 (MPKLKNHSGAKKRFAKTATGKYKRRKAGRKHLLTPQSGSRKREMRQTGIIKPES).

Belongs to the bacterial ribosomal protein bL35 family.

This chain is Large ribosomal subunit protein bL35, found in Elusimicrobium minutum (strain Pei191).